A 162-amino-acid chain; its full sequence is AP-1 complex subunit sigma-2 (162 aa).

It belongs to the adaptor complexes small subunit family. In terms of assembly, adaptor protein complex 1 (AP-1) is a heterotetramer composed of two large adaptins (gamma-type subunit and beta-type subunit), a medium adaptin (mu-type subunit) and a small adaptin (sigma-type subunit). As to expression, expressed in roots, stems, leaves, flowers and siliques (developing fruits and seeds).

It localises to the golgi apparatus. The protein resides in the cytoplasmic vesicle. Its subcellular location is the clathrin-coated vesicle membrane. Subunit of clathrin-associated adaptor protein complex 1 that plays a role in protein sorting at the trans-Golgi network and early endosomes (TGN/EE). The AP complexes mediate the recruitment of clathrin to membranes and the recognition of sorting signals within the cytosolic tails of transmembrane cargo molecules. This is AP-1 complex subunit sigma-2 (AAP19-2) from Arabidopsis thaliana (Mouse-ear cress).